Consider the following 211-residue polypeptide: Outer-membrane lipoprotein carrier protein (211 aa).

The signal sequence occupies residues 1–24 (MRNRIIVSACAALAMFAIQAPAHA).

This sequence belongs to the LolA family. In terms of assembly, monomer.

The protein localises to the periplasm. Participates in the translocation of lipoproteins from the inner membrane to the outer membrane. Only forms a complex with a lipoprotein if the residue after the N-terminal Cys is not an aspartate (The Asp acts as a targeting signal to indicate that the lipoprotein should stay in the inner membrane). In Cupriavidus necator (strain ATCC 17699 / DSM 428 / KCTC 22496 / NCIMB 10442 / H16 / Stanier 337) (Ralstonia eutropha), this protein is Outer-membrane lipoprotein carrier protein.